Consider the following 368-residue polypeptide: tRNA-specific 2-thiouridylase MnmA (368 aa).

ATP is bound by residues 10–17 (AMSGGVDS) and Met-36. Cys-108 acts as the Nucleophile in catalysis. Cys-108 and Cys-206 form a disulfide bridge. Gly-132 lines the ATP pocket. Positions 156-158 (KDQ) are interaction with tRNA. Cys-206 acts as the Cysteine persulfide intermediate in catalysis. The segment at 312-313 (RY) is interaction with tRNA.

Belongs to the MnmA/TRMU family.

It localises to the cytoplasm. It catalyses the reaction S-sulfanyl-L-cysteinyl-[protein] + uridine(34) in tRNA + AH2 + ATP = 2-thiouridine(34) in tRNA + L-cysteinyl-[protein] + A + AMP + diphosphate + H(+). In terms of biological role, catalyzes the 2-thiolation of uridine at the wobble position (U34) of tRNA, leading to the formation of s(2)U34. This is tRNA-specific 2-thiouridylase MnmA from Natranaerobius thermophilus (strain ATCC BAA-1301 / DSM 18059 / JW/NM-WN-LF).